Here is a 158-residue protein sequence, read N- to C-terminus: Urease accessory protein UreE (158 aa).

Belongs to the UreE family.

The protein localises to the cytoplasm. In terms of biological role, involved in urease metallocenter assembly. Binds nickel. Probably functions as a nickel donor during metallocenter assembly. The chain is Urease accessory protein UreE from Microcystis aeruginosa (strain NIES-843 / IAM M-2473).